We begin with the raw amino-acid sequence, 436 residues long: Serine hydroxymethyltransferase (436 aa).

(6S)-5,6,7,8-tetrahydrofolate-binding positions include Leu133 and 137-139 (GHI). The residue at position 242 (Lys242) is an N6-(pyridoxal phosphate)lysine.

This sequence belongs to the SHMT family. As to quaternary structure, homodimer. The cofactor is pyridoxal 5'-phosphate.

The protein localises to the cytoplasm. The enzyme catalyses (6R)-5,10-methylene-5,6,7,8-tetrahydrofolate + glycine + H2O = (6S)-5,6,7,8-tetrahydrofolate + L-serine. It functions in the pathway one-carbon metabolism; tetrahydrofolate interconversion. It participates in amino-acid biosynthesis; glycine biosynthesis; glycine from L-serine: step 1/1. Its function is as follows. Catalyzes the reversible interconversion of serine and glycine with tetrahydrofolate (THF) serving as the one-carbon carrier. This reaction serves as the major source of one-carbon groups required for the biosynthesis of purines, thymidylate, methionine, and other important biomolecules. Also exhibits THF-independent aldolase activity toward beta-hydroxyamino acids, producing glycine and aldehydes, via a retro-aldol mechanism. The sequence is that of Serine hydroxymethyltransferase from Pelagibacter ubique (strain HTCC1062).